The primary structure comprises 222 residues: N-(5'-phosphoribosyl)anthranilate isomerase (222 aa).

The protein belongs to the TrpF family.

The catalysed reaction is N-(5-phospho-beta-D-ribosyl)anthranilate = 1-(2-carboxyphenylamino)-1-deoxy-D-ribulose 5-phosphate. It participates in amino-acid biosynthesis; L-tryptophan biosynthesis; L-tryptophan from chorismate: step 3/5. This chain is N-(5'-phosphoribosyl)anthranilate isomerase, found in Brevibacillus brevis (strain 47 / JCM 6285 / NBRC 100599).